The chain runs to 131 residues: Small ribosomal subunit protein uS9 (131 aa).

Belongs to the universal ribosomal protein uS9 family.

In Actinobacillus succinogenes (strain ATCC 55618 / DSM 22257 / CCUG 43843 / 130Z), this protein is Small ribosomal subunit protein uS9.